Consider the following 230-residue polypeptide: Small ribosomal subunit protein uS3 (230 aa).

Positions 39 to 107 (VRNYLFKKLI…PVHINIEEIK (69 aa)) constitute a KH type-2 domain.

This sequence belongs to the universal ribosomal protein uS3 family. Part of the 30S ribosomal subunit. Forms a tight complex with proteins S10 and S14.

Binds the lower part of the 30S subunit head. Binds mRNA in the 70S ribosome, positioning it for translation. The protein is Small ribosomal subunit protein uS3 of Vesicomyosocius okutanii subsp. Calyptogena okutanii (strain HA).